The following is a 138-amino-acid chain: Sec-independent protein translocase protein TatB (138 aa).

A helical transmembrane segment spans residues 1–21; the sequence is MFDIGFSELLLIAVVALVVLG. Positions 116–138 are disordered; sequence VHHVHVPPPSTSTHGNNGQEKSQ. Residues 126-138 are compositionally biased toward polar residues; that stretch reads TSTHGNNGQEKSQ.

It belongs to the TatB family. The Tat system comprises two distinct complexes: a TatABC complex, containing multiple copies of TatA, TatB and TatC subunits, and a separate TatA complex, containing only TatA subunits. Substrates initially bind to the TatABC complex, which probably triggers association of the separate TatA complex to form the active translocon.

It localises to the cell inner membrane. Its function is as follows. Part of the twin-arginine translocation (Tat) system that transports large folded proteins containing a characteristic twin-arginine motif in their signal peptide across membranes. Together with TatC, TatB is part of a receptor directly interacting with Tat signal peptides. TatB may form an oligomeric binding site that transiently accommodates folded Tat precursor proteins before their translocation. The polypeptide is Sec-independent protein translocase protein TatB (Xylella fastidiosa (strain Temecula1 / ATCC 700964)).